Consider the following 558-residue polypeptide: Adenine deaminase (558 aa).

The protein belongs to the metallo-dependent hydrolases superfamily. Adenine deaminase family. It depends on Mn(2+) as a cofactor.

The enzyme catalyses adenine + H2O + H(+) = hypoxanthine + NH4(+). The chain is Adenine deaminase from Methanoregula boonei (strain DSM 21154 / JCM 14090 / 6A8).